Reading from the N-terminus, the 269-residue chain is Protein OPG079 (269 aa).

It belongs to the orthopoxvirus OPG079 family. In terms of assembly, homoomultimer (Potential). Interacts with the small subunit of ribonucleotide reductase.

It is found in the host cytoplasm. Its function is as follows. Plays an essential role in viral DNA replication. Binds to ssDNA with high affinity and localizes to cytoplasmic factories where nascent viral genomes accumulate. May disrupt loops, hairpins and other secondary structures present on ssDNA to reduce and eliminate pausing of viral DNA polymerase at specific sites during elongation. This chain is Protein OPG079 (OPG079), found in Cynomys gunnisoni (Gunnison's prairie dog).